Here is a 264-residue protein sequence, read N- to C-terminus: Acyl-[acyl-carrier-protein]--UDP-N-acetylglucosamine O-acyltransferase (264 aa).

It belongs to the transferase hexapeptide repeat family. LpxA subfamily. As to quaternary structure, homotrimer.

Its subcellular location is the cytoplasm. The catalysed reaction is a (3R)-hydroxyacyl-[ACP] + UDP-N-acetyl-alpha-D-glucosamine = a UDP-3-O-[(3R)-3-hydroxyacyl]-N-acetyl-alpha-D-glucosamine + holo-[ACP]. It participates in glycolipid biosynthesis; lipid IV(A) biosynthesis; lipid IV(A) from (3R)-3-hydroxytetradecanoyl-[acyl-carrier-protein] and UDP-N-acetyl-alpha-D-glucosamine: step 1/6. In terms of biological role, involved in the biosynthesis of lipid A, a phosphorylated glycolipid that anchors the lipopolysaccharide to the outer membrane of the cell. This Rickettsia typhi (strain ATCC VR-144 / Wilmington) protein is Acyl-[acyl-carrier-protein]--UDP-N-acetylglucosamine O-acyltransferase.